The following is a 1429-amino-acid chain: Protein lin-12 (1429 aa).

The first 15 residues, M1–L15, serve as a signal peptide directing secretion. Residues S16–N908 lie on the Extracellular side of the membrane. EGF-like domains lie at H20–E61 and T114–E150. Cystine bridges form between C24–C35, C29–C49, C51–C60, C118–C129, C123–C138, C140–C149, C156–C169, C163–C178, and C180–C189. The N-linked (GlcNAc...) asparagine glycan is linked to N41. Positions D152–L190 constitute an EGF-like 3; calcium-binding domain. A glycan (N-linked (GlcNAc...) asparagine) is linked at N165. N194 carries an N-linked (GlcNAc...) asparagine glycan. 4 EGF-like domains span residues K201–E246, K250–Q285, G287–E323, and E323–E363. 30 disulfides stabilise this stretch: C205–C227, C221–C234, C236–C245, C254–C264, C259–C273, C275–C284, C291–C302, C296–C311, C313–C322, C327–C339, C334–C351, C353–C362, C369–C381, C375–C390, C392–C401, C408–C419, C413–C429, C431–C440, C462–C475, C469–C480, C482–C491, C507–C518, C512–C529, C531–C540, C547–C558, C552–C567, C569–C578, C586–C597, C591–C607, and C609–C618. In terms of domain architecture, EGF-like 8; calcium-binding spans D365–D402. N-linked (GlcNAc...) asparagine glycosylation is present at N378. EGF-like domains lie at P404 to E441, G449 to E492, S503 to E541, H543 to E579, and K582 to E619. The N-linked (GlcNAc...) asparagine glycan is linked to N515. A glycan (N-linked (GlcNAc...) asparagine) is linked at N623. Disulfide bonds link C638–C661, C643–C656, C652–C668, C678–C702, C684–C697, C693–C709, C716–C742, C724–C737, and C733–C749. 3 LNR repeats span residues C638–P674, C678–C709, and C716–N754. N751, N754, and N900 each carry an N-linked (GlcNAc...) asparagine glycan. Residues A909–G931 form a helical membrane-spanning segment. Residues N932–F1429 are Cytoplasmic-facing. The interval R933–E952 is RAM domain. 5 ANK repeats span residues D1093 to I1122, S1126 to E1158, N1162 to Y1194, K1206 to K1236, and D1240 to A1269. The disordered stretch occupies residues I1308–N1374. The span at K1319–R1330 shows a compositional bias: basic residues. The segment covering H1361 to N1374 has biased composition (polar residues).

The protein belongs to the NOTCH family. In terms of assembly, may interact with dsl-1. May interact with lag-2. May interact with osm-11. Interacts with sel-10. When activated, the lin-12/Notch intracellular domain (NICD) can become a component of a complex consisting of at least the NICD, lag-1 and sel-8/lag-3. The NICD probably facilitates ordered assembly of the ternary complex via allosteric interactions of its RBP-j associated molecule (RAM) domain with lag-1. Post-translationally, upon binding its ligands, it is cleaved (S2 cleavage) in its extracellular domain, close to the transmembrane domain. S2 cleavage is probably mediated by the metalloproteases adm-4 and sup-17. It is then cleaved (S3 cleavage) downstream of its transmembrane domain, releasing it from the cell membrane; S3 cleavage requires a multiprotein gamma-secretase complex, which may include presenilin sel-12.

It is found in the apical cell membrane. It localises to the nucleus. In terms of biological role, essential signaling protein which has a major role in many developmental processes; involved in cell fate decisions that require cell-cell interactions. Probable membrane-bound receptor for putative ligands lag-2, apx-1, dsl-1 and osm-11. Upon ligand activation, and releasing from the cell membrane, the lin-12/Notch intracellular domain (NICD) forms a transcriptional activator complex with lag-1 and lag-3 and regulates expression of various genes. Required for ventral cell fates in the postembryonic mesodermal lineage (M lineage) and in uterine precursor cells. Activity in cell fate decisions and tumorigenesis is negatively regulated by sel-10. Best known for involvement in cell-fate decisions during development, but also plays roles in other events. Regulates recovery from the dauer larval state. Modulates chemosensory avoidance of octanol and quiescence during molting. Promotes basement membrane mobility during tissue remodeling. Involved in establishing left-right asymmetry during intestinal organogenesis. This Caenorhabditis elegans protein is Protein lin-12.